The following is a 146-amino-acid chain: Catabolic 3-dehydroquinase (146 aa).

Y24 acts as the Proton acceptor in catalysis. Residues N78, H84, and D91 each coordinate substrate. H104 serves as the catalytic Proton donor. Substrate is bound by residues 105–106 (IT) and R115.

It belongs to the type-II 3-dehydroquinase family. Homododecamer. Adopts a ring-like structure, composed of an arrangement of two hexameric rings stacked on top of one another.

It carries out the reaction 3-dehydroquinate = 3-dehydroshikimate + H2O. It functions in the pathway aromatic compound metabolism; 3,4-dihydroxybenzoate biosynthesis; 3,4-dihydroxybenzoate from 3-dehydroquinate: step 1/2. Is involved in the catabolism of quinate. Allows the utilization of quinate as carbon source via the beta-ketoadipate pathway. This Candida albicans (strain SC5314 / ATCC MYA-2876) (Yeast) protein is Catabolic 3-dehydroquinase.